The chain runs to 402 residues: Phosphoglycerate kinase (402 aa).

Substrate-binding positions include 21 to 23 (DFN), Arg36, 59 to 62 (HLGR), Arg118, and Arg151. ATP is bound by residues Lys201, Gly293, Glu324, and 353–356 (GGDS).

It belongs to the phosphoglycerate kinase family. Monomer.

Its subcellular location is the cytoplasm. It catalyses the reaction (2R)-3-phosphoglycerate + ATP = (2R)-3-phospho-glyceroyl phosphate + ADP. It participates in carbohydrate degradation; glycolysis; pyruvate from D-glyceraldehyde 3-phosphate: step 2/5. In Thermosipho africanus (strain TCF52B), this protein is Phosphoglycerate kinase.